The following is a 72-amino-acid chain: Translation initiation factor IF-1 (72 aa).

In terms of domain architecture, S1-like spans 1-72 (MAKEDNIEMQ…SKGRIVFRSR (72 aa)).

The protein belongs to the IF-1 family. Component of the 30S ribosomal translation pre-initiation complex which assembles on the 30S ribosome in the order IF-2 and IF-3, IF-1 and N-formylmethionyl-tRNA(fMet); mRNA recruitment can occur at any time during PIC assembly.

It is found in the cytoplasm. In terms of biological role, one of the essential components for the initiation of protein synthesis. Stabilizes the binding of IF-2 and IF-3 on the 30S subunit to which N-formylmethionyl-tRNA(fMet) subsequently binds. Helps modulate mRNA selection, yielding the 30S pre-initiation complex (PIC). Upon addition of the 50S ribosomal subunit IF-1, IF-2 and IF-3 are released leaving the mature 70S translation initiation complex. The chain is Translation initiation factor IF-1 from Klebsiella pneumoniae subsp. pneumoniae (strain ATCC 700721 / MGH 78578).